The sequence spans 258 residues: Probable succinate transporter subunit YjjP (258 aa).

A run of 5 helical transmembrane segments spans residues 116–137 (YPRWLLVLMVGLSCACFCKLNN), 143–160 (AVVTFFASTVAMYIRQLL), 171–191 (FCITAFVATTISGLMLRLPAF), 197–217 (IAMAASVLLLVPGFPLINAVA), and 231–251 (WAIASLLTLATCIGVVMAMTM).

This sequence belongs to the ThrE exporter (TC 2.A.79) family. In terms of assembly, the transporter is composed of YjjB and YjjP.

The protein localises to the cell inner membrane. In terms of biological role, involved in succinate export with YjjB. Both proteins are required for export. Participates in succinate export, but also in the export of other dicarboxylates, such as fumarate and malate. Contributes to succinate production under both aerobic and anaerobic conditions, and increases fumarate and malate production during anaerobic succinate production. The polypeptide is Probable succinate transporter subunit YjjP (Klebsiella aerogenes (strain ATCC 13048 / DSM 30053 / CCUG 1429 / JCM 1235 / KCTC 2190 / NBRC 13534 / NCIMB 10102 / NCTC 10006 / CDC 819-56) (Enterobacter aerogenes)).